The following is a 1417-amino-acid chain: DNA-directed RNA polymerase subunit beta' (1417 aa).

Zn(2+) contacts are provided by Cys-68, Cys-70, Cys-83, and Cys-86. Residues Asp-458, Asp-460, and Asp-462 each contribute to the Mg(2+) site. Cys-811, Cys-884, Cys-891, and Cys-894 together coordinate Zn(2+).

This sequence belongs to the RNA polymerase beta' chain family. As to quaternary structure, the RNAP catalytic core consists of 2 alpha, 1 beta, 1 beta' and 1 omega subunit. When a sigma factor is associated with the core the holoenzyme is formed, which can initiate transcription. Mg(2+) is required as a cofactor. Zn(2+) serves as cofactor.

It catalyses the reaction RNA(n) + a ribonucleoside 5'-triphosphate = RNA(n+1) + diphosphate. DNA-dependent RNA polymerase catalyzes the transcription of DNA into RNA using the four ribonucleoside triphosphates as substrates. This chain is DNA-directed RNA polymerase subunit beta', found in Francisella tularensis subsp. novicida (strain U112).